The chain runs to 198 residues: Recombination protein RecR (198 aa).

Residues cysteine 57–cysteine 72 form a C4-type zinc finger. The Toprim domain occupies serine 80 to proline 175.

It belongs to the RecR family.

May play a role in DNA repair. It seems to be involved in an RecBC-independent recombinational process of DNA repair. It may act with RecF and RecO. The polypeptide is Recombination protein RecR (Listeria innocua serovar 6a (strain ATCC BAA-680 / CLIP 11262)).